A 476-amino-acid polypeptide reads, in one-letter code: Serine/threonine-protein kinase chk-2 (476 aa).

In terms of domain architecture, FHA spans 66–127 (FVCGRGSDDA…NGTLVNQEMI (62 aa)). The Protein kinase domain occupies 170 to 436 (HVTSHSLGKG…AVELMSTQWM (267 aa)). Residues 177-184 (GKGGFGKV), lysine 199, and 252-258 (EYVGGGE) each bind ATP. Catalysis depends on aspartate 301, which acts as the Proton acceptor. Residues 305-306 (EN) and aspartate 322 contribute to the ATP site.

The protein belongs to the protein kinase superfamily. CAMK Ser/Thr protein kinase family. CHK2 subfamily. Mg(2+) serves as cofactor. Highly expressed in germline tissue.

It localises to the nucleus. The enzyme catalyses L-seryl-[protein] + ATP = O-phospho-L-seryl-[protein] + ADP + H(+). The catalysed reaction is L-threonyl-[protein] + ATP = O-phospho-L-threonyl-[protein] + ADP + H(+). Its function is as follows. Serine/threonine-protein kinase which is required for checkpoint-mediated cell cycle arrest, activation of DNA repair and apoptosis in response to the presence of DNA double-strand breaks. May also negatively regulate cell cycle progression during unperturbed cell cycles. Phosphorylates and inhibits cdc25 phosphatase, preventing entry into mitosis. Required for nuclear reorganization and homologous chromosome pairing during meiotic prophase. The polypeptide is Serine/threonine-protein kinase chk-2 (chk-2) (Caenorhabditis elegans).